The following is a 324-amino-acid chain: 3-hydroxyisobutyrate dehydrogenase, mitochondrial (324 aa).

A mitochondrion-targeting transit peptide spans 1 to 25; that stretch reads MSLRVMSPAMLNAWSQTLVRAMSTQ. NAD(+) contacts are provided by residues 29–58, 92–93, and Thr-121; these read KNIGFVGLGNMGANMASNLIKAGHKLHVFD and LP. Lys-196 is a catalytic residue. NAD(+) is bound at residue Lys-271.

Belongs to the HIBADH-related family. 3-hydroxyisobutyrate dehydrogenase subfamily.

Its subcellular location is the mitochondrion. It catalyses the reaction 3-hydroxy-2-methylpropanoate + NAD(+) = 2-methyl-3-oxopropanoate + NADH + H(+). It functions in the pathway amino-acid degradation; L-valine degradation. The sequence is that of 3-hydroxyisobutyrate dehydrogenase, mitochondrial from Drosophila melanogaster (Fruit fly).